The sequence spans 118 residues: uncharacterized protein (118 aa).

This is an uncharacterized protein from Invertebrate iridescent virus 6 (IIV-6).